The primary structure comprises 113 residues: Urotensin-2B (113 aa).

Residues 1-27 form the signal peptide; the sequence is MKVFSTSLWCGLLTLLSVMNLFKSVRG. The propeptide occupies 28 to 103; sequence RPHLSSGHEL…LDNLSSSHTK (76 aa). A disulfide bridge connects residues Cys-107 and Cys-112.

This sequence belongs to the urotensin-2 family.

The protein resides in the secreted. Potent vasoconstrictor. This Mus musculus (Mouse) protein is Urotensin-2B (Uts2b).